A 1344-amino-acid polypeptide reads, in one-letter code: Centrosomal P4.1-associated protein (1344 aa).

2 disordered regions span residues 67-123 (SSEE…NNDL) and 187-225 (PGTL…ASNV). Polar residues predominate over residues 211–225 (SYSNPTQENSCASNV). Ser-248 bears the Phosphoserine mark. A disordered region spans residues 257-300 (QEAHVKRNDLKEESPAHPSGEGALPRWEKKMGRSQEGKDVNLQK). Composition is skewed to basic and acidic residues over residues 259 to 271 (AHVK…EESP) and 282 to 297 (RWEK…KDVN). A Phosphoserine modification is found at Ser-304. The interval 307 to 382 (VVNIDERPIK…FTNAKSKFQK (76 aa)) is alpha/beta-tubulin binding. 2 disordered regions span residues 347-407 (QEAE…DRQH) and 425-470 (TVKK…KKRD). Over residues 388-398 (LASTQSPSEDQ) the composition is skewed to polar residues. Phosphoserine is present on Ser-528. 2 positions are modified to phosphoserine; by PLK2: Ser-577 and Ser-583. Disordered stretches follow at residues 600–626 (RLSS…SNCS) and 672–735 (TSEI…DTGA). Positions 709–720 (VGDRVFSNREDS) are enriched in basic and acidic residues. Position 748 is a phosphoserine (Ser-748). Positions 887–1344 (QPPEFMVCFI…DGNVLMDTEM (458 aa)) are interaction with STIL. The segment at 1105-1133 (QGNLSRRIKSAPPRDLGSSDKGQAALPRE) is disordered.

It belongs to the TCP10 family. As to quaternary structure, forms homodimers. Associates with microtubules plus ends; binds to beta-tubulin subunits exposed on microtubule outer surface at its distal tip; also associates with microtubule lattice. Associated with the gamma-tubulin complex. Interacts with the head domain of EPB41. Interacts with LYST. Interacts with CEP152 (via C-terminus). Interacts with STIL. Forms a complex with STIL and SASS6. In terms of processing, phosphorylation at Ser-577 and Ser-583 by PLK2 is required for procentriole formation and centriole elongation. Phosphorylation by PLK2 oscillates during the cell cycle: it increases at G1/S transition and decreases during the exit from mitosis. Phosphorylation at Ser-583 is also mediated by PLK4 but is not a critical step in PLK4 function in procentriole assembly.

The protein localises to the cytoplasm. Its subcellular location is the cytoskeleton. It is found in the microtubule organizing center. The protein resides in the centrosome. It localises to the centriole. Functionally, plays an important role in cell division and centrosome function by participating in centriole duplication. Inhibits microtubule nucleation from the centrosome. Involved in the regulation of slow processive growth of centriolar microtubules. Acts as microtubule plus-end tracking protein that stabilizes centriolar microtubules and inhibits microtubule polymerization and extension from the distal ends of centrioles. Required for centriole elongation and for STIL-mediated centriole amplification. Required for the recruitment of CEP295 to the proximal end of new-born centrioles at the centriolar microtubule wall during early S phase in a PLK4-dependent manner. May be involved in the control of centriolar-microtubule growth by acting as a regulator of tubulin release. This Mus musculus (Mouse) protein is Centrosomal P4.1-associated protein (Cpap).